The primary structure comprises 206 residues: MTIGNTKQTSAAAPKPTYFDHNFKLEATKVLPGEYVATNRDMLLVTVLGSCVSCCLRDSAANVSGLNHFMLPDALMDSEAAATMPARYGMHAMEILINEMIKLGADRQRMEAKIFGGGNVLKGILKSNIGERNVDFVRQYLAKEGIPVMAEDVLDSYPRKLYFFSRSGRVLVKKIKEVHNRTIFERELSYRERLRRMPLDGSIELF.

This sequence belongs to the CheD family.

The catalysed reaction is L-glutaminyl-[protein] + H2O = L-glutamyl-[protein] + NH4(+). Its function is as follows. Probably deamidates glutamine residues to glutamate on methyl-accepting chemotaxis receptors (MCPs), playing an important role in chemotaxis. The protein is Probable chemoreceptor glutamine deamidase CheD of Laribacter hongkongensis (strain HLHK9).